Reading from the N-terminus, the 154-residue chain is Large ribosomal subunit protein uL22 (154 aa).

This sequence belongs to the universal ribosomal protein uL22 family. Part of the 50S ribosomal subunit.

Its function is as follows. This protein binds specifically to 23S rRNA. It makes multiple contacts with different domains of the 23S rRNA in the assembled 50S subunit and ribosome. Functionally, the globular domain of the protein is located near the polypeptide exit tunnel on the outside of the subunit, while an extended beta-hairpin is found that lines the wall of the exit tunnel in the center of the 70S ribosome. The polypeptide is Large ribosomal subunit protein uL22 (Methanosphaera stadtmanae (strain ATCC 43021 / DSM 3091 / JCM 11832 / MCB-3)).